A 113-amino-acid chain; its full sequence is Con-Ins G3b (113 aa).

Positions 1–21 are cleaved as a signal peptide; that stretch reads MTTSFYFLLVALGLLLYVCQS. The propeptide occupies 22-29; it reads SFGNQHTR. Pro34 is subject to 4-hydroxyproline; partial. Cystine bridges form between Cys38/Cys99, Cys50/Cys112, and Cys98/Cys103. Residue Glu41 is modified to 4-carboxyglutamate. Residue His51 is modified to Histidine amide. The propeptide at 52 to 92 is c peptide; sequence GKRNDAGKKRGRASPLWQRQGFLSMLKAKRNEAFFLQRDGR. The residue at position 96 (Glu96) is a 4-carboxyglutamate. Residue Pro102 is modified to 4-hydroxyproline; partial.

Belongs to the insulin family. In terms of assembly, heterodimer of A and B chains; disulfide-linked. In terms of processing, it is noteworthy that in this dimer, in contrast to Con-Ins G1, the chain B is amidated and not the chain A. In terms of tissue distribution, expressed by the venom gland.

The protein resides in the secreted. In terms of biological role, this venom insulin, from a fish-hunting cone snail, facilitates prey capture by rapidly inducing hypoglycemic shock. It is one of the smallest known insulin found in nature and lacks the C-terminal segment of the B chain that, in human insulin, mediates engagement of the insulin receptor (INSR) and assembly of the hormone's hexameric storage form. Despite lacking this segment, it both binds and activates human insulin receptor (long isoform (HIR-B)) with only a 10-fold lower potency. In vivo, intraperitoneal injection of this peptide into zebrafish lowers blood glucose with the same potency than human insulin. In addition, when applied to water, this peptide reduces overall locomotor activity of zebrafish larvae, observed as a significant decrease in the percentage of time spent swimming and movement frequency. In Conus geographus (Geography cone), this protein is Con-Ins G3b.